We begin with the raw amino-acid sequence, 386 residues long: Vesicle-associated protein 2-2 (386 aa).

The residue at position 1 (M1) is an N-acetylmethionine. The Cytoplasmic segment spans residues 1-363 (MNMPLLDIQP…TKKIVKEVHN (363 aa)). Positions 5 to 125 (LLDIQPRTLQ…EENKLRVTLV (121 aa)) constitute an MSP domain. S279 is subject to Phosphoserine. Positions 300 to 353 (ELKLVKDIEEMKLKVDALESKLKQADSTISKLMEERSISSQHRQSLQHELAELR) form a coiled coil. The helical; Anchor for type IV membrane protein transmembrane segment at 364 to 384 (GFPLLYVCVVAFIAYVIGHFL) threads the bilayer.

Belongs to the VAMP-associated protein (VAP) (TC 9.B.17) family. In terms of assembly, interacts with cowpea mosaic virus (CPMV) NTP-binding protein (NTB).

Its subcellular location is the endoplasmic reticulum membrane. Its function is as follows. May play a role in vesicle trafficking. The chain is Vesicle-associated protein 2-2 (PVA22) from Arabidopsis thaliana (Mouse-ear cress).